Here is a 3550-residue protein sequence, read N- to C-terminus: Zinc finger homeobox protein 4 (3550 aa).

At Met1 the chain carries N-acetylmethionine. 3 disordered regions span residues 1–54, 426–479, and 521–614; these read METC…LKTD, HLSS…AYSN, and TSSS…IECP. The span at 9–20 shows a compositional bias: polar residues; it reads ISRQENGQSTSK. Basic and acidic residues-rich tracts occupy residues 39–54 and 433–451; these read EPDR…LKTD and KMSE…KEST. The span at 467–479 shows a compositional bias: acidic residues; sequence EPGDEDEEDAYSN. Composition is skewed to polar residues over residues 542-553 and 566-576; these read GRSNGNVTNSYS and RDGTTAAPSET. 3 consecutive C2H2-type zinc fingers follow at residues 611-634, 642-665, and 697-721; these read IECP…TMMH, LKCP…KEKH, and FRCE…SDKH. Residues 739–763 form a disordered region; sequence HSAPTPNTSLSGCGTPSPSKPKQKP. Polar residues predominate over residues 742–752; sequence PTPNTSLSGCG. C2H2-type zinc fingers lie at residues 765 to 787, 915 to 939, 971 to 993, and 1019 to 1043; these read RRCE…MTSE, YQCK…TDKH, LKCN…TTNH, and YYCA…SVKH. The segment at 1100-1142 is disordered; sequence KAASEEPSEDAGDPLKPPTVAEDDEKEAHKRDNSEGKISTKDP. The segment covering 1125-1142 has biased composition (basic and acidic residues); that stretch reads KEAHKRDNSEGKISTKDP. Lys1165 participates in a covalent cross-link: Glycyl lysine isopeptide (Lys-Gly) (interchain with G-Cter in SUMO2). 2 consecutive C2H2-type zinc fingers follow at residues 1188–1211 and 1217–1240; these read YQYP…LSQH and ICCP…THLH. The interval 1271-1339 is disordered; sequence APEKSEQDPP…EWNKTSSKDV (69 aa). A compositionally biased stretch (basic and acidic residues) spans 1297–1326; sequence VDDKSMSGLEDSKVGVEIKNEEQKPAKEPV. Residue Lys1315 forms a Glycyl lysine isopeptide (Lys-Gly) (interchain with G-Cter in SUMO2) linkage. 2 C2H2-type zinc fingers span residues 1368–1390 and 1396–1419; these read YRCN…SQYH and TMCT…EAGH. Residues 1467–1492 are disordered; sequence EGKASPVESDGSSIPDDLGLEPKRTL. A C2H2-type 12 zinc finger spans residues 1512–1538; it reads YKCTVCKESFTQKNILLVHYNSVSHLH. Lys1562 participates in a covalent cross-link: Glycyl lysine isopeptide (Lys-Gly) (interchain with G-Cter in SUMO2). A C2H2-type 13 zinc finger spans residues 1564–1588; the sequence is YKCSTCSVAYSQSSTLEIHMRSVLH. The interval 1779-1873 is disordered; the sequence is PQLQPQNQQP…CIPPPRIASG (95 aa). The segment covering 1792–1808 has biased composition (low complexity); that stretch reads QQQQPQQQPSKLLKQEQ. Lys1805 participates in a covalent cross-link: Glycyl lysine isopeptide (Lys-Gly) (interchain with G-Cter in SUMO2). Over residues 1823–1860 the composition is skewed to basic and acidic residues; the sequence is PSYKEAEEVTEKQEKPKQEFINDTEGLKDSKDIKKQKS. The C2H2-type 14 zinc finger occupies 1916-1939; sequence LECGICGKLFSNVLILKSHQEHVH. Residues 1984 to 2006 are disordered; sequence KIPNTVSAPLQAPPPTPPSAPQQ. Over residues 1994–2003 the composition is skewed to pro residues; sequence QAPPPTPPSA. 2 consecutive DNA-binding regions (homeobox) follow at residues 2069 to 2128 and 2166 to 2225; these read FKRP…RQRN and KRSS…RKSY. A C2H2-type 15; degenerate zinc finger spans residues 2252–2276; sequence YQCKKCNVVFPRIFDLITHQKKQCY. Over residues 2318-2331 the composition is skewed to polar residues; that stretch reads TLVASSGSGTSTPL. Residues 2318–2412 form a disordered region; sequence TLVASSGSGT…SQTPIPSSPL (95 aa). The segment covering 2337–2355 has biased composition (basic and acidic residues); that stretch reads PEPEKNSPKTEYPGEKTKQ. Polar residues predominate over residues 2356 to 2376; sequence SDPSLPQGTKSAPSSVLTSSE. Residues 2383–2392 are compositionally biased toward pro residues; it reads PQPPTQPPKQ. Residues 2401-2412 are compositionally biased toward polar residues; the sequence is SASQTPIPSSPL. A C2H2-type 16 zinc finger spans residues 2430-2452; the sequence is YPCDQCTLAFPTLELWKEHQHMH. A compositionally biased stretch (polar residues) spans 2490-2508; that stretch reads GSSLTQMPPQTSTAHTTAP. The segment at 2490–2545 is disordered; it reads GSSLTQMPPQTSTAHTTAPASVAASLKRKLEDKEDNNCSEKEGGNSGEDQHRDKRL. The segment covering 2517–2541 has biased composition (basic and acidic residues); the sequence is RKLEDKEDNNCSEKEGGNSGEDQHR. Residues 2542–2601 constitute a DNA-binding region (homeobox 3); the sequence is DKRLRTTITPEQLEILYEKYLLDSNPTRKMLDHIAREVGLKKRVVQVWFQNTRARERKGQ. The segment at 2612–2635 adopts a C2H2-type 17 zinc-finger fold; sequence KRCPFCRALFKAKSALESHIRSRH. Ser2645 carries the post-translational modification Phosphoserine. 2 disordered regions span residues 2746–2791 and 2810–2866; these read AISD…ATTP and HFND…PGHK. Residues 2781 to 2791 show a composition bias toward polar residues; it reads LDSLQKPATTP. Residues 2811–2820 are compositionally biased toward basic and acidic residues; the sequence is FNDKDGDHDQ. Positions 2843-2855 are enriched in low complexity; it reads PSSPNPFGSSNPF. The segment at residues 2865-2924 is a DNA-binding region (homeobox 4); sequence HKRFRTQMSNLQLKVLKACFSDYRTPTMQECEMLGNEIGLPKRVVQVWFQNARAKERKFK. Residues 2943 to 2967 form a C2H2-type 18 zinc finger; the sequence is PECTLCGVKYSARLSIRDHIFSKQH. Disordered regions lie at residues 3051–3156 and 3261–3318; these read PSSL…EEKI and QDSL…VQLD. Residues 3058 to 3068 show a composition bias toward polar residues; sequence PQNSNTLTSPG. Residues 3075–3088 show a composition bias toward low complexity; it reads PSSATSSPALSLSS. Over residues 3097-3109 the composition is skewed to pro residues; the sequence is TPPPPPPPPPPPS. Residues 3136-3156 are compositionally biased toward basic and acidic residues; the sequence is IKEEESEAIKPEKHPKKEEKI. A Glycyl lysine isopeptide (Lys-Gly) (interchain with G-Cter in SUMO2) cross-link involves residue Lys3137. Residues 3248–3277 adopt a coiled-coil conformation; the sequence is ALLQQYQQYQQSLQDSLQKQQKQQQEQQQK. Residues 3261–3276 are compositionally biased toward low complexity; it reads QDSLQKQQKQQQEQQQ. A compositionally biased stretch (basic and acidic residues) spans 3298-3318; that stretch reads SETKEEKSTAPESTKEEVQLD. The segment at 3337 to 3361 adopts a C2H2-type 19; degenerate zinc-finger fold; it reads FVCRKCQMMFTDEDATVNHQKSFCY. Residues 3381–3405 form a C2H2-type 20 zinc finger; sequence YQCLACDLALSGNEALSQHLQSSLH. The interval 3424–3445 is disordered; it reads LPHSVCSPPPNTSSTSPSAASS. Over residues 3435–3445 the composition is skewed to low complexity; that stretch reads TSSTSPSAASS.

Belongs to the krueppel C2H2-type zinc-finger protein family. In terms of tissue distribution, expressed in brain, heart, lung, muscle and small intestine. No expression detected in undifferentiated P19 cells, however, expression was seen following retinoic acid treatment to induce neuronal differentiation. Expressed in undifferentiated C2C12 cells, following induction of muscle differentiation in a low-serum medium, expression levels were decreased.

It localises to the nucleus. May play a role in neural and muscle differentiation. May be involved in transcriptional regulation. This Mus musculus (Mouse) protein is Zinc finger homeobox protein 4 (Zfhx4).